A 126-amino-acid chain; its full sequence is Large ribosomal subunit protein bL12 (126 aa).

The protein belongs to the bacterial ribosomal protein bL12 family. In terms of assembly, homodimer. Part of the ribosomal stalk of the 50S ribosomal subunit. Forms a multimeric L10(L12)X complex, where L10 forms an elongated spine to which 2 to 4 L12 dimers bind in a sequential fashion. Binds GTP-bound translation factors.

In terms of biological role, forms part of the ribosomal stalk which helps the ribosome interact with GTP-bound translation factors. Is thus essential for accurate translation. This is Large ribosomal subunit protein bL12 from Nocardia farcinica (strain IFM 10152).